A 519-amino-acid chain; its full sequence is ATP synthase subunit alpha 2 (519 aa).

Position 179–186 (179–186 (GDRQTGKT)) interacts with ATP.

The protein belongs to the ATPase alpha/beta chains family. In terms of assembly, F-type ATPases have 2 components, CF(1) - the catalytic core - and CF(0) - the membrane proton channel. CF(1) has five subunits: alpha(3), beta(3), gamma(1), delta(1), epsilon(1). CF(0) has three main subunits: a(1), b(2) and c(9-12). The alpha and beta chains form an alternating ring which encloses part of the gamma chain. CF(1) is attached to CF(0) by a central stalk formed by the gamma and epsilon chains, while a peripheral stalk is formed by the delta and b chains.

The protein resides in the cell inner membrane. It catalyses the reaction ATP + H2O + 4 H(+)(in) = ADP + phosphate + 5 H(+)(out). Functionally, produces ATP from ADP in the presence of a proton gradient across the membrane. The alpha chain is a regulatory subunit. This is ATP synthase subunit alpha 2 from Syntrophus aciditrophicus (strain SB).